A 341-amino-acid polypeptide reads, in one-letter code: L-threonine 3-dehydrogenase (341 aa).

Residue cysteine 38 coordinates Zn(2+). Residues threonine 40 and histidine 43 each act as charge relay system in the active site. Zn(2+)-binding residues include histidine 63, glutamate 64, cysteine 93, cysteine 96, cysteine 99, and cysteine 107. NAD(+) is bound by residues isoleucine 175, aspartate 195, arginine 200, 262-264 (LGI), and 286-287 (IY).

This sequence belongs to the zinc-containing alcohol dehydrogenase family. In terms of assembly, homotetramer. Zn(2+) is required as a cofactor.

It localises to the cytoplasm. It catalyses the reaction L-threonine + NAD(+) = (2S)-2-amino-3-oxobutanoate + NADH + H(+). The protein operates within amino-acid degradation; L-threonine degradation via oxydo-reductase pathway; glycine from L-threonine: step 1/2. Functionally, catalyzes the NAD(+)-dependent oxidation of L-threonine to 2-amino-3-ketobutyrate. The protein is L-threonine 3-dehydrogenase of Salmonella gallinarum (strain 287/91 / NCTC 13346).